Here is a 569-residue protein sequence, read N- to C-terminus: Urease subunit alpha (569 aa).

A Urease domain is found at 131–569; the sequence is GGIDTHIHFI…LPLAQRYLLL (439 aa). 3 residues coordinate Ni(2+): H136, H138, and K219. Residue K219 is modified to N6-carboxylysine. Residue H221 participates in substrate binding. The Ni(2+) site is built by H248 and H274. H322 (proton donor) is an active-site residue. D362 is a binding site for Ni(2+).

It belongs to the metallo-dependent hydrolases superfamily. Urease alpha subunit family. As to quaternary structure, heterotrimer of UreA (gamma), UreB (beta) and UreC (alpha) subunits. Three heterotrimers associate to form the active enzyme. Ni cation serves as cofactor. Post-translationally, carboxylation allows a single lysine to coordinate two nickel ions.

It is found in the cytoplasm. The catalysed reaction is urea + 2 H2O + H(+) = hydrogencarbonate + 2 NH4(+). Its pathway is nitrogen metabolism; urea degradation; CO(2) and NH(3) from urea (urease route): step 1/1. This Synechococcus sp. (strain WH7805) protein is Urease subunit alpha.